Reading from the N-terminus, the 227-residue chain is Large ribosomal subunit protein uL3 (227 aa).

Position 154 is an N5-methylglutamine (Gln154).

This sequence belongs to the universal ribosomal protein uL3 family. As to quaternary structure, part of the 50S ribosomal subunit. Forms a cluster with proteins L14 and L19. Methylated by PrmB.

Functionally, one of the primary rRNA binding proteins, it binds directly near the 3'-end of the 23S rRNA, where it nucleates assembly of the 50S subunit. In Acidiphilium cryptum (strain JF-5), this protein is Large ribosomal subunit protein uL3.